The following is a 1106-amino-acid chain: Carbamoyl phosphate synthase large chain (1106 aa).

The carboxyphosphate synthetic domain stretch occupies residues M1 to E401. ATP is bound by residues R129, R169, G175, G176, R208, V210, E215, G241, V242, H243, Q284, and E298. Residues K133–I327 enclose the ATP-grasp 1 domain. Residues Q284, E298, and N300 each contribute to the Mg(2+) site. Mn(2+) is bound by residues Q284, E298, and N300. The oligomerization domain stretch occupies residues I402–A577. The interval I578–G964 is carbamoyl phosphate synthetic domain. An ATP-grasp 2 domain is found at D706–M896. ATP contacts are provided by R742, Q781, L783, E787, G812, V813, H814, S815, Q855, and E867. Residues Q855, E867, and N869 each contribute to the Mg(2+) site. 3 residues coordinate Mn(2+): Q855, E867, and N869. Residues F965–N1106 enclose the MGS-like domain. The tract at residues F965–N1106 is allosteric domain.

The protein belongs to the CarB family. As to quaternary structure, composed of two chains; the small (or glutamine) chain promotes the hydrolysis of glutamine to ammonia, which is used by the large (or ammonia) chain to synthesize carbamoyl phosphate. Tetramer of heterodimers (alpha,beta)4. Mg(2+) serves as cofactor. It depends on Mn(2+) as a cofactor.

The catalysed reaction is hydrogencarbonate + L-glutamine + 2 ATP + H2O = carbamoyl phosphate + L-glutamate + 2 ADP + phosphate + 2 H(+). It carries out the reaction hydrogencarbonate + NH4(+) + 2 ATP = carbamoyl phosphate + 2 ADP + phosphate + 2 H(+). Its pathway is amino-acid biosynthesis; L-arginine biosynthesis; carbamoyl phosphate from bicarbonate: step 1/1. It functions in the pathway pyrimidine metabolism; UMP biosynthesis via de novo pathway; (S)-dihydroorotate from bicarbonate: step 1/3. In terms of biological role, large subunit of the glutamine-dependent carbamoyl phosphate synthetase (CPSase). CPSase catalyzes the formation of carbamoyl phosphate from the ammonia moiety of glutamine, carbonate, and phosphate donated by ATP, constituting the first step of 2 biosynthetic pathways, one leading to arginine and/or urea and the other to pyrimidine nucleotides. The large subunit (synthetase) binds the substrates ammonia (free or transferred from glutamine from the small subunit), hydrogencarbonate and ATP and carries out an ATP-coupled ligase reaction, activating hydrogencarbonate by forming carboxy phosphate which reacts with ammonia to form carbamoyl phosphate. The protein is Carbamoyl phosphate synthase large chain of Natranaerobius thermophilus (strain ATCC BAA-1301 / DSM 18059 / JW/NM-WN-LF).